Consider the following 458-residue polypeptide: UDP-N-acetylmuramate--L-alanine ligase (458 aa).

118–124 (GTHGKTT) contacts ATP.

The protein belongs to the MurCDEF family.

Its subcellular location is the cytoplasm. It carries out the reaction UDP-N-acetyl-alpha-D-muramate + L-alanine + ATP = UDP-N-acetyl-alpha-D-muramoyl-L-alanine + ADP + phosphate + H(+). Its pathway is cell wall biogenesis; peptidoglycan biosynthesis. Its function is as follows. Cell wall formation. The sequence is that of UDP-N-acetylmuramate--L-alanine ligase from Clostridium acetobutylicum (strain ATCC 824 / DSM 792 / JCM 1419 / IAM 19013 / LMG 5710 / NBRC 13948 / NRRL B-527 / VKM B-1787 / 2291 / W).